The following is an 85-amino-acid chain: Translation initiation factor IF-1 (85 aa).

Residues 1 to 72 (MAKEELLEMR…TKARITYRFM (72 aa)) form the S1-like domain.

This sequence belongs to the IF-1 family. As to quaternary structure, component of the 30S ribosomal translation pre-initiation complex which assembles on the 30S ribosome in the order IF-2 and IF-3, IF-1 and N-formylmethionyl-tRNA(fMet); mRNA recruitment can occur at any time during PIC assembly.

The protein resides in the cytoplasm. Functionally, one of the essential components for the initiation of protein synthesis. Stabilizes the binding of IF-2 and IF-3 on the 30S subunit to which N-formylmethionyl-tRNA(fMet) subsequently binds. Helps modulate mRNA selection, yielding the 30S pre-initiation complex (PIC). Upon addition of the 50S ribosomal subunit IF-1, IF-2 and IF-3 are released leaving the mature 70S translation initiation complex. This Erythrobacter litoralis (strain HTCC2594) protein is Translation initiation factor IF-1.